Consider the following 487-residue polypeptide: 3-octaprenyl-4-hydroxybenzoate carboxy-lyase (487 aa).

Mn(2+) is bound at residue asparagine 172. Residues 175–177 (IYR), 189–191 (RWL), and 194–195 (RG) contribute to the prenylated FMN site. Residue glutamate 238 participates in Mn(2+) binding. Aspartate 287 functions as the Proton donor in the catalytic mechanism.

This sequence belongs to the UbiD family. As to quaternary structure, homohexamer. Requires prenylated FMN as cofactor. The cofactor is Mn(2+).

The protein localises to the cell membrane. The enzyme catalyses a 4-hydroxy-3-(all-trans-polyprenyl)benzoate + H(+) = a 2-(all-trans-polyprenyl)phenol + CO2. Its pathway is cofactor biosynthesis; ubiquinone biosynthesis. Functionally, catalyzes the decarboxylation of 3-octaprenyl-4-hydroxy benzoate to 2-octaprenylphenol, an intermediate step in ubiquinone biosynthesis. This is 3-octaprenyl-4-hydroxybenzoate carboxy-lyase from Nitrosomonas eutropha (strain DSM 101675 / C91 / Nm57).